Consider the following 315-residue polypeptide: Bifunctional pinoresinol-lariciresinol reductase (315 aa).

NADP(+)-binding positions include 14-20, R39, and K48; that span reads GGTGYLG. K142 (proton acceptor) is an active-site residue. Residue R146 participates in NADP(+) binding. Position 274 (H274) interacts with substrate.

The protein belongs to the NmrA-type oxidoreductase family. Isoflavone reductase subfamily. As to quaternary structure, dimer.

It carries out the reaction (+)-lariciresinol + NADP(+) = (+)-pinoresinol + NADPH + H(+). It catalyses the reaction (-)-secoisolariciresinol + NADP(+) = (+)-lariciresinol + NADPH + H(+). In terms of biological role, reductase involved in lignan (-)-hinokinin biosynthesis. Catalyzes the enantioselective conversion of (+)-pinoresinol into (+)-lariciresinol and of (+)-lariciresinol into (-)-secoisolariciresinol. Abstracts the 4R-hydride from the NADPH cofactor during catalysis. Has also a low phenylcoumaran benzylic ether reductase activity. The sequence is that of Bifunctional pinoresinol-lariciresinol reductase (PLR_Lc1) from Linum corymbulosum (Linum).